Here is a 427-residue protein sequence, read N- to C-terminus: MTAIVDIVGREILDSRGNPTVEVDVLLEDGALGRAAVPSGASTGAHEAVELRDGDTGRYLGKGVEKAVEAVNGEIFDAIGGLDAEEQAQIDAVMIELDGTPNKARLGANAILGVSLAVAKAAAISNNLPLYRYVGGVNARTLPVPMMNIINGGAHADNPIDFQEFMILPAGAPTFAEGLRWGAEIFHTLKKGLKDAGHNTNVGDEGGFAPNLASAEAALDFVLKAIEKAGFKPGEDVFLGLDCAATEFFKDGAYHYEGEGKVRDIDAQVKYLAQLVGNYPIVTIEDGMSEDDWAGWKQLTDAIGAKCQLVGDDLFVTNVERLGRGIKEATGNAILVKVNQIGSLTETLETVELAHKSGYRAVMSHRSGETEDSTIADLAVATNCGQIKTGSLARSDRTAKYNQLLRIEQELGAQAKYAGKAALKAFA.

Residue Gln-163 participates in (2R)-2-phosphoglycerate binding. The active-site Proton donor is the Glu-205. The Mg(2+) site is built by Asp-242, Glu-285, and Asp-312. Lys-337, Arg-366, Ser-367, and Lys-388 together coordinate (2R)-2-phosphoglycerate. The active-site Proton acceptor is Lys-337.

Belongs to the enolase family. Mg(2+) serves as cofactor.

Its subcellular location is the cytoplasm. It is found in the secreted. The protein localises to the cell surface. It catalyses the reaction (2R)-2-phosphoglycerate = phosphoenolpyruvate + H2O. The protein operates within carbohydrate degradation; glycolysis; pyruvate from D-glyceraldehyde 3-phosphate: step 4/5. Its function is as follows. Catalyzes the reversible conversion of 2-phosphoglycerate (2-PG) into phosphoenolpyruvate (PEP). It is essential for the degradation of carbohydrates via glycolysis. This is Enolase from Azorhizobium caulinodans (strain ATCC 43989 / DSM 5975 / JCM 20966 / LMG 6465 / NBRC 14845 / NCIMB 13405 / ORS 571).